A 353-amino-acid chain; its full sequence is Ferrochelatase (353 aa).

The span at 1–13 (MTLERTGRDEEKA) shows a compositional bias: basic and acidic residues. Residues 1 to 23 (MTLERTGRDEEKALTQPPSGHSS) form a disordered region. Fe cation-binding residues include H223 and E304.

The protein belongs to the ferrochelatase family.

Its subcellular location is the cytoplasm. It catalyses the reaction heme b + 2 H(+) = protoporphyrin IX + Fe(2+). Its pathway is porphyrin-containing compound metabolism; protoheme biosynthesis; protoheme from protoporphyrin-IX: step 1/1. Catalyzes the ferrous insertion into protoporphyrin IX. This Chelativorans sp. (strain BNC1) protein is Ferrochelatase.